We begin with the raw amino-acid sequence, 209 residues long: FMN-dependent NADH:quinone oxidoreductase (209 aa).

FMN is bound by residues Ser9 and 15–17 (SNS).

This sequence belongs to the azoreductase type 1 family. In terms of assembly, homodimer. It depends on FMN as a cofactor.

The catalysed reaction is 2 a quinone + NADH + H(+) = 2 a 1,4-benzosemiquinone + NAD(+). It carries out the reaction N,N-dimethyl-1,4-phenylenediamine + anthranilate + 2 NAD(+) = 2-(4-dimethylaminophenyl)diazenylbenzoate + 2 NADH + 2 H(+). Its function is as follows. Quinone reductase that provides resistance to thiol-specific stress caused by electrophilic quinones. In terms of biological role, also exhibits azoreductase activity. Catalyzes the reductive cleavage of the azo bond in aromatic azo compounds to the corresponding amines. This chain is FMN-dependent NADH:quinone oxidoreductase, found in Bordetella bronchiseptica (strain ATCC BAA-588 / NCTC 13252 / RB50) (Alcaligenes bronchisepticus).